Here is a 118-residue protein sequence, read N- to C-terminus: Ribosome-binding factor A (118 aa).

The protein belongs to the RbfA family. Monomer. Binds 30S ribosomal subunits, but not 50S ribosomal subunits or 70S ribosomes.

The protein resides in the cytoplasm. One of several proteins that assist in the late maturation steps of the functional core of the 30S ribosomal subunit. Associates with free 30S ribosomal subunits (but not with 30S subunits that are part of 70S ribosomes or polysomes). Required for efficient processing of 16S rRNA. May interact with the 5'-terminal helix region of 16S rRNA. The sequence is that of Ribosome-binding factor A from Bacillus cereus (strain B4264).